A 349-amino-acid polypeptide reads, in one-letter code: 4-hydroxy-3-methylbut-2-en-1-yl diphosphate synthase (flavodoxin) (349 aa).

Residues Cys265, Cys268, Cys300, and Glu307 each coordinate [4Fe-4S] cluster.

The protein belongs to the IspG family. It depends on [4Fe-4S] cluster as a cofactor.

The enzyme catalyses (2E)-4-hydroxy-3-methylbut-2-enyl diphosphate + oxidized [flavodoxin] + H2O + 2 H(+) = 2-C-methyl-D-erythritol 2,4-cyclic diphosphate + reduced [flavodoxin]. It participates in isoprenoid biosynthesis; isopentenyl diphosphate biosynthesis via DXP pathway; isopentenyl diphosphate from 1-deoxy-D-xylulose 5-phosphate: step 5/6. Its function is as follows. Converts 2C-methyl-D-erythritol 2,4-cyclodiphosphate (ME-2,4cPP) into 1-hydroxy-2-methyl-2-(E)-butenyl 4-diphosphate. The polypeptide is 4-hydroxy-3-methylbut-2-en-1-yl diphosphate synthase (flavodoxin) (Thermodesulfovibrio yellowstonii (strain ATCC 51303 / DSM 11347 / YP87)).